Here is a 598-residue protein sequence, read N- to C-terminus: Chaperone protein DnaK (598 aa).

At T175 the chain carries Phosphothreonine; by autocatalysis. The span at 571-591 (AKSAAASSNKDDSLNNNSSSN) shows a compositional bias: low complexity. The tract at residues 571–598 (AKSAAASSNKDDSLNNNSSSNNDEETFE) is disordered.

It belongs to the heat shock protein 70 family.

Acts as a chaperone. In Mycoplasmopsis agalactiae (strain NCTC 10123 / CIP 59.7 / PG2) (Mycoplasma agalactiae), this protein is Chaperone protein DnaK.